The sequence spans 601 residues: MAATMVKHEILNYSEDEEENYSDEGDWGDWKADDNGIEGGEEEEEDDGDDSESDFLCLFCDSHFVSCDLLFEHCRLSHGFDFHGVRKELKLDFYSSFKLINYIRSQVAENMCFSWKIEADDYKDVKFPWDEEKYLKPFWQEDSLLYSFADDEEDEEVTFDREEVMEELQKLGDLSIDVEALGESSMSNSDKCNINGSKDVTSLSNCNGLKQSSADDLIVNGKDAEPKVCDGRLVNRNIRKVNENYFGSYSSFGIHREMLSDKVRTEAYRDALLKNPTLLNGSVVMDVGCGTGILSLFAAKAGASRVVAVEASEKMAKVATKIAKDNKVFNDNEHNGVLEVAHSMVEELDKSIQIQPHSVDVLVSEWMGYCLLYESMLSSVLYARDRWLKPGGAILPDTATMFVAGFGKGATSLPFWEDVYGFDMSSIGKEIHDDTTRLPIVDVIAERDLVTQPTLLQTFDLATMKPDEVDFTATATLEPTESEAKTRLCHGVVLWFDTGFTSRFCKENPTVLSTSPYTPPTHWAQTILTFQEPISVAPASVLSGNDRREAIGTEECPASSIHLRVSVARAHEHRSIDISLEATGLSSKGQKRHWPVQIFNL.

The span at 1–10 shows a compositional bias: basic and acidic residues; that stretch reads MAATMVKHEI. Residues 1 to 50 form a disordered region; that stretch reads MAATMVKHEILNYSEDEEENYSDEGDWGDWKADDNGIEGGEEEEEDDGDD. Acidic residues-rich tracts occupy residues 14–27 and 35–50; these read SEDEEENYSDEGDW and NGIEGGEEEEEDDGDD. The C2H2-type zinc-finger motif lies at 57-78; that stretch reads CLFCDSHFVSCDLLFEHCRLSH. The SAM-dependent MTase PRMT-type domain maps to 242–554; the sequence is NENYFGSYSS…NDRREAIGTE (313 aa). Residues Arg-264, Gly-288, Glu-310, Ser-312, Val-345, and Glu-346 each coordinate S-adenosyl-L-homocysteine. Active-site residues include Glu-365 and Glu-374.

This sequence belongs to the class I-like SAM-binding methyltransferase superfamily. Protein arginine N-methyltransferase family.

The protein resides in the cytoplasm. The protein localises to the cytosol. The enzyme catalyses L-arginyl-[protein] + S-adenosyl-L-methionine = N(omega)-methyl-L-arginyl-[protein] + S-adenosyl-L-homocysteine + H(+). It catalyses the reaction L-arginyl-[protein] + 2 S-adenosyl-L-methionine = N(omega),N(omega)-dimethyl-L-arginyl-[protein] + 2 S-adenosyl-L-homocysteine + 2 H(+). In terms of biological role, protein-arginine N-methyltransferase that catalyzes both the monomethylation and asymmetric dimethylation of the guanidino nitrogens of arginine residues in target proteins, and therefore falls into the group of type I methyltransferases. This chain is Probable protein arginine N-methyltransferase 3 (PRMT3), found in Arabidopsis thaliana (Mouse-ear cress).